A 766-amino-acid chain; its full sequence is Tetratricopeptide repeat protein 14 (766 aa).

The disordered stretch occupies residues L35–E55. One can recognise an S1 motif domain in the interval G125 to Y207. TPR repeat units lie at residues S209–S242, A306–N339, E341–H373, and C381–F414. The tract at residues E463–P743 is disordered. Low complexity predominate over residues S475–S496. Residues S497 to R506 show a composition bias toward basic residues. A compositionally biased stretch (polar residues) spans P539–K550. Residues Q551–R562 show a composition bias toward basic and acidic residues. Polar residues predominate over residues F594 to S605. Basic and acidic residues-rich tracts occupy residues K606–H616 and N629–E657. The segment covering V661 to S673 has biased composition (polar residues). S666 bears the Phosphoserine mark. The segment covering R707 to V738 has biased composition (basic and acidic residues).

It belongs to the TTC14 family.

The chain is Tetratricopeptide repeat protein 14 from Mus musculus (Mouse).